The following is a 314-amino-acid chain: DNA-directed RNA polymerase subunit alpha (314 aa).

The alpha N-terminal domain (alpha-NTD) stretch occupies residues 1-228; sequence MIEIEKPKIE…EHLNIFVGLT (228 aa). Residues 246-314 form an alpha C-terminal domain (alpha-CTD) region; sequence EKVLEMTIEE…ELGLGLRKDD (69 aa).

Belongs to the RNA polymerase alpha chain family. In terms of assembly, homodimer. The RNAP catalytic core consists of 2 alpha, 1 beta, 1 beta' and 1 omega subunit. When a sigma factor is associated with the core the holoenzyme is formed, which can initiate transcription.

It carries out the reaction RNA(n) + a ribonucleoside 5'-triphosphate = RNA(n+1) + diphosphate. In terms of biological role, DNA-dependent RNA polymerase catalyzes the transcription of DNA into RNA using the four ribonucleoside triphosphates as substrates. The chain is DNA-directed RNA polymerase subunit alpha from Bacillus velezensis (strain DSM 23117 / BGSC 10A6 / LMG 26770 / FZB42) (Bacillus amyloliquefaciens subsp. plantarum).